The primary structure comprises 101 residues: Small ribosomal subunit protein uS14 (101 aa).

Residues methionine 1–aspartate 20 form a disordered region.

This sequence belongs to the universal ribosomal protein uS14 family. Part of the 30S ribosomal subunit. Contacts proteins S3 and S10.

Functionally, binds 16S rRNA, required for the assembly of 30S particles and may also be responsible for determining the conformation of the 16S rRNA at the A site. In Acidiphilium cryptum (strain JF-5), this protein is Small ribosomal subunit protein uS14.